A 595-amino-acid polypeptide reads, in one-letter code: Potassium-transporting ATPase potassium-binding subunit (595 aa).

A run of 10 helical transmembrane segments spans residues 9–29 (ICGYLGVLLALAKPLGSYMAA), 63–83 (TGYASAFLVFNLLGVLAVYAL), 135–155 (GLTVQNFVSAASGMAVLVALI), 177–197 (ILHILLPLSFLLALLLIGQGV), 285–305 (FLEMLAILVISGALCHTFGVM), 312–332 (GWVILAAMTLIFVPLLFVTVL), 412–432 (GLYGMLVFAIVAVFVAGLMIG), 451–471 (AIVILVPPLMVLGGTAVAVML), 516–536 (LMLGLAMWFSRYWLAVPVLAI), and 560–580 (FVGLLVGVVIIVGALTFIPAL).

It belongs to the KdpA family. In terms of assembly, the system is composed of three essential subunits: KdpA, KdpB and KdpC.

The protein resides in the cell inner membrane. Its function is as follows. Part of the high-affinity ATP-driven potassium transport (or Kdp) system, which catalyzes the hydrolysis of ATP coupled with the electrogenic transport of potassium into the cytoplasm. This subunit binds the periplasmic potassium ions and delivers the ions to the membrane domain of KdpB through an intramembrane tunnel. The polypeptide is Potassium-transporting ATPase potassium-binding subunit (Methylococcus capsulatus (strain ATCC 33009 / NCIMB 11132 / Bath)).